The sequence spans 234 residues: Phosphoribosylaminoimidazole-succinocarboxamide synthase (234 aa).

Belongs to the SAICAR synthetase family.

The enzyme catalyses 5-amino-1-(5-phospho-D-ribosyl)imidazole-4-carboxylate + L-aspartate + ATP = (2S)-2-[5-amino-1-(5-phospho-beta-D-ribosyl)imidazole-4-carboxamido]succinate + ADP + phosphate + 2 H(+). It participates in purine metabolism; IMP biosynthesis via de novo pathway; 5-amino-1-(5-phospho-D-ribosyl)imidazole-4-carboxamide from 5-amino-1-(5-phospho-D-ribosyl)imidazole-4-carboxylate: step 1/2. This is Phosphoribosylaminoimidazole-succinocarboxamide synthase from Staphylococcus aureus (strain MRSA252).